A 446-amino-acid chain; its full sequence is uncharacterized protein (446 aa).

Disordered stretches follow at residues 198-233, 309-337, and 394-431; these read SIQK…ENYS, NEDN…DDSK, and SESV…FGNT. Over residues 199–224 the composition is skewed to low complexity; that stretch reads IQKQIPKQTQEQTQKQTQEQTQESSQ. Acidic residues predominate over residues 317 to 333; that stretch reads DNEEDSDESDIESDSDL. The span at 397–418 shows a compositional bias: basic and acidic residues; it reads VKSDSNESKSIKPESIKSESIK.

This is an uncharacterized protein from Acanthamoeba polyphaga mimivirus (APMV).